The sequence spans 337 residues: CMRF35-like molecule 1 (337 aa).

A signal peptide spans Met-1–Ala-19. Positions Glu-20–Asn-125 constitute an Ig-like V-type domain. Residues Glu-20–Ser-193 are Extracellular-facing. Positions Val-39–Ser-45 are plays an important role in murine norovirus (MNV) binding. 2 disulfides stabilise this stretch: Cys-41/Cys-109 and Cys-55/Cys-63. The helical transmembrane segment at Val-194–Ala-214 threads the bilayer. The Cytoplasmic segment spans residues Trp-215–Pro-337. Disordered stretches follow at residues Gln-248–His-270 and Leu-318–Pro-337. Low complexity predominate over residues Ser-252–Ser-266.

Belongs to the CD300 family. In terms of assembly, interacts with PTPN6/SHP-1 in a tyrosine phosphorylation dependent manner. Interacts with IL4R. In terms of processing, phosphorylated on tyrosine. As to expression, expressed in myeloid cells. Present on the surface of macrophages (at protein level). Highly expressed by alveolar, splenic macrophages and bone marrow-derived dendritic cells. Expression is increased following aeroallergen challenge in macrophages, mast cells, and eosinophils.

It is found in the cell membrane. Its function is as follows. Acts as an inhibitory receptor for myeloid cells and mast cells. Positively regulates the phagocytosis of apoptotic cells (efferocytosis) via phosphatidylserine (PS) recognition; recognizes and binds PS as a ligand which is expressed on the surface of apoptotic cells. Plays an important role in the maintenance of immune homeostasis, by promoting macrophage-mediated efferocytosis and by inhibiting dendritic cell-mediated efferocytosis. Negatively regulates Fc epsilon receptor-dependent mast cell activation and allergic responses via binding to ceramide which acts as a ligand. May act as a coreceptor for interleukin 4 (IL-4). Associates with and regulates IL-4 receptor alpha-mediated responses by augmenting IL-4- and IL-13-induced signaling. Negatively regulates the Toll-like receptor (TLR) signaling mediated by MYD88 and TRIF through activation of PTPN6/SHP-1 and PTPN11/SHP-2. Inhibits osteoclast formation. Induces macrophage cell death upon engagement. In terms of biological role, (Microbial infection) Acts as a functional receptor for murine norovirus (MNV). Mediates binding to the cell surface and is both necessary and sufficient for viral entry and replication. This interaction requires Mg(2+) and Ca(2+) and is enhanced by bile acids. Primary determinant of MNV species tropism and is sufficient to render cells permissive to infection by MNV. Can render nonmurine mammalian cells susceptible to MNV infection. The protein is CMRF35-like molecule 1 (Cd300lf) of Mus musculus (Mouse).